The primary structure comprises 463 residues: Cysteine--tRNA ligase (463 aa).

Cysteine 29 is a binding site for Zn(2+). The short motif at 31-41 (MTIYDLCHIGH) is the 'HIGH' region element. 3 residues coordinate Zn(2+): cysteine 218, histidine 243, and glutamate 247. The 'KMSKS' region motif lies at 275-279 (KMSKS). Lysine 278 provides a ligand contact to ATP.

This sequence belongs to the class-I aminoacyl-tRNA synthetase family. As to quaternary structure, monomer. Requires Zn(2+) as cofactor.

It localises to the cytoplasm. It catalyses the reaction tRNA(Cys) + L-cysteine + ATP = L-cysteinyl-tRNA(Cys) + AMP + diphosphate. The chain is Cysteine--tRNA ligase from Polaromonas naphthalenivorans (strain CJ2).